Reading from the N-terminus, the 672-residue chain is DNA ligase (672 aa).

Residues 37–41 (DAEYD), 86–87 (SL), and E115 contribute to the NAD(+) site. Catalysis depends on K117, which acts as the N6-AMP-lysine intermediate. The NAD(+) site is built by R138, E172, K288, and K312. C406, C409, C424, and C429 together coordinate Zn(2+). Residues 590 to 672 (DISSTFAGKT…LQEIQQSKQV (83 aa)) form the BRCT domain.

It belongs to the NAD-dependent DNA ligase family. LigA subfamily. Requires Mg(2+) as cofactor. Mn(2+) is required as a cofactor.

The catalysed reaction is NAD(+) + (deoxyribonucleotide)n-3'-hydroxyl + 5'-phospho-(deoxyribonucleotide)m = (deoxyribonucleotide)n+m + AMP + beta-nicotinamide D-nucleotide.. DNA ligase that catalyzes the formation of phosphodiester linkages between 5'-phosphoryl and 3'-hydroxyl groups in double-stranded DNA using NAD as a coenzyme and as the energy source for the reaction. It is essential for DNA replication and repair of damaged DNA. The protein is DNA ligase of Anoxybacillus flavithermus (strain DSM 21510 / WK1).